A 637-amino-acid chain; its full sequence is Neutral ceramidase (637 aa).

Position 34 (histidine 34) interacts with Mg(2+). 2 residues coordinate Zn(2+): histidine 96 and histidine 204. Serine 256 serves as the catalytic Nucleophile. Zn(2+) contacts are provided by glutamate 417 and tyrosine 453. 3 residues coordinate Mg(2+): aspartate 575, aspartate 577, and threonine 580.

Belongs to the neutral ceramidase family. It depends on Zn(2+) as a cofactor. Mg(2+) serves as cofactor.

It catalyses the reaction an N-acylsphing-4-enine + H2O = sphing-4-enine + a fatty acid. The enzyme catalyses an N-acylsphinganine + H2O = sphinganine + a fatty acid. The catalysed reaction is an N-acyl-(4R)-4-hydroxysphinganine + H2O = (4R)-hydroxysphinganine + a fatty acid. It carries out the reaction N-(9Z-octadecenoyl)-sphing-4-enine + H2O = sphing-4-enine + (9Z)-octadecenoate. It catalyses the reaction N-(hexanoyl)sphing-4-enine + H2O = hexanoate + sphing-4-enine. The enzyme catalyses N-hexadecanoylsphing-4-enine + H2O = sphing-4-enine + hexadecanoate. The catalysed reaction is N-octadecanoylsphing-4-enine + H2O = sphing-4-enine + octadecanoate. It carries out the reaction N-eicosanoyl-sphing-4-enine + H2O = eicosanoate + sphing-4-enine. It catalyses the reaction N-(15Z-tetracosenoyl)-sphing-4-enine + H2O = (15Z)-tetracosenoate + sphing-4-enine. The enzyme catalyses N-tetracosanoyl-sphing-4-enine + H2O = tetracosanoate + sphing-4-enine. 90% of activity is inhibited by nickel, zinc and calcium ions. Magnesium, cobalt, copper and manganese ions inhibit between 50 and 80% of activity. Functionally, catalyzes the cleavage of the N-acyl linkage of the ceramides (Cers) to yield sphingosine (Sph) and free fatty acid. Also catalyzes the synthesis of Cers from Sph and fatty acid. Cers containning C6-C24 fatty acids are well hydrolyzed, and Cers with mono unsaturated fatty acids are much more hydrolyzed than those with saturated fatty acids. In Mycobacterium tuberculosis (strain ATCC 25618 / H37Rv), this protein is Neutral ceramidase.